The sequence spans 711 residues: Polyribonucleotide nucleotidyltransferase (711 aa).

Residues Asp486 and Asp492 each coordinate Mg(2+). The KH domain occupies 553–612 (PRIHTIKINPDKIKDVIGKGGSVIRALTEETGTTIEIEDDGTVKIAATDGDKAQHAIRRI). One can recognise an S1 motif domain in the interval 622 to 690 (GRIYNGKVTR…RQGRVRLSIK (69 aa)). The tract at residues 691 to 711 (EATEQTPSAAAPEAPVAEQGE) is disordered. The segment covering 699 to 711 (AAAPEAPVAEQGE) has biased composition (low complexity).

The protein belongs to the polyribonucleotide nucleotidyltransferase family. In terms of assembly, component of the RNA degradosome, which is a multiprotein complex involved in RNA processing and mRNA degradation. Mg(2+) serves as cofactor.

Its subcellular location is the cytoplasm. The enzyme catalyses RNA(n+1) + phosphate = RNA(n) + a ribonucleoside 5'-diphosphate. Its function is as follows. Involved in mRNA degradation. Catalyzes the phosphorolysis of single-stranded polyribonucleotides processively in the 3'- to 5'-direction. This chain is Polyribonucleotide nucleotidyltransferase, found in Klebsiella pneumoniae (strain 342).